The primary structure comprises 207 residues: 3-demethoxyubiquinol 3-hydroxylase (207 aa).

Basic and acidic residues predominate over residues 22-32; that stretch reads ERANPADRLAP. Positions 22 to 41 are disordered; that stretch reads ERANPADRLAPETEQMNPEE. Residues Glu56, Glu86, His89, Glu138, Glu170, and His173 each coordinate Fe cation.

Belongs to the COQ7 family. Fe cation serves as cofactor.

It localises to the cell membrane. It carries out the reaction a 5-methoxy-2-methyl-3-(all-trans-polyprenyl)benzene-1,4-diol + AH2 + O2 = a 3-demethylubiquinol + A + H2O. Its pathway is cofactor biosynthesis; ubiquinone biosynthesis. Its function is as follows. Catalyzes the hydroxylation of 2-nonaprenyl-3-methyl-6-methoxy-1,4-benzoquinol during ubiquinone biosynthesis. This chain is 3-demethoxyubiquinol 3-hydroxylase, found in Cupriavidus metallidurans (strain ATCC 43123 / DSM 2839 / NBRC 102507 / CH34) (Ralstonia metallidurans).